Reading from the N-terminus, the 543-residue chain is Periplasmic oligopeptide-binding protein OppA (543 aa).

Residues 1–26 form the signal peptide; it reads MSNITKKSLIAAGILTALIAASAATA. The cysteines at positions 297 and 443 are disulfide-linked.

This sequence belongs to the bacterial solute-binding protein 5 family. As to quaternary structure, the complex is composed of two ATP-binding proteins (OppD and OppF), two transmembrane proteins (OppB and OppC) and a solute-binding protein (OppA).

It localises to the periplasm. In terms of biological role, part of the ABC transporter complex OppABCDF involved in the uptake of oligopeptides, including the cell wall murein tripeptide L-alanyl-gamma-D-glutamyl-meso-diaminopimelate. Plays an important nutritional role and is involved in the recycling of cell wall peptides. Binds peptides containing from two to five amino acid residues regardless of their sequence. Also binds cell wall peptides, such as L-alanyl-gamma-D-glutamyl-meso-diaminopimelate. In Salmonella typhimurium (strain LT2 / SGSC1412 / ATCC 700720), this protein is Periplasmic oligopeptide-binding protein OppA.